The primary structure comprises 215 residues: Eukaryotic translation initiation factor 4E-1 (215 aa).

A disordered region spans residues 1 to 32 (MAEDTETRPASAGAEEREEGEIADDGDGSSAA). The segment covering 16-27 (EREEGEIADDGD) has biased composition (acidic residues). EIF4G-binding stretches follow at residues 40-43 (HPLE) and 50-86 (FDNP…NNIH). MRNA-binding positions include 58-63 (RQVAWG), Lys90, and 108-109 (WE). A disulfide bridge links Cys113 with Cys151. Positions 134-143 (HTLLAMIGEQ) are EIF4G-binding. MRNA is bound by residues 158–163 (RQKQER) and 203–207 (KRSDK).

Belongs to the eukaryotic initiation factor 4E family. In terms of assembly, EIF4F is a multi-subunit complex, the composition of which varies with external and internal environmental conditions. It is composed of at least EIF4A, EIF4E and EIF4G. EIF4E is also known to interact with other partners. In higher plants two isoforms of EIF4F have been identified, named isoform EIF4F and isoform EIF(iso)4F. Isoform EIF4F has subunits p220 and p26, whereas isoform EIF(iso)4F has subunits p82 and p28. Post-translationally, according to the redox status, the Cys-113-Cys-151 disulfide bridge may have a role in regulating protein function by affecting its ability to bind capped mRNA.

It localises to the nucleus. Its subcellular location is the cytoplasm. In terms of biological role, component of the protein complex eIF4F, which is involved in the recognition of the mRNA cap, ATP-dependent unwinding of 5'-terminal secondary structure and recruitment of mRNA to the ribosome. Recognizes and binds the 7-methylguanosine-containing mRNA cap during an early step in the initiation of protein synthesis and facilitates ribosome binding by inducing the unwinding of the mRNAs secondary structures. The polypeptide is Eukaryotic translation initiation factor 4E-1 (Triticum aestivum (Wheat)).